The chain runs to 144 residues: Large ribosomal subunit protein uL15 (144 aa).

The interval M1 to V44 is disordered. Gly residues predominate over residues T23–Q35.

The protein belongs to the universal ribosomal protein uL15 family. Part of the 50S ribosomal subunit.

Binds to the 23S rRNA. In Leuconostoc citreum (strain KM20), this protein is Large ribosomal subunit protein uL15.